The chain runs to 428 residues: Ribosomal RNA small subunit methyltransferase B (428 aa).

S-adenosyl-L-methionine contacts are provided by residues 253–259 (CAAPGGK), Asp276, Asp302, and Asp321. Cys374 functions as the Nucleophile in the catalytic mechanism.

This sequence belongs to the class I-like SAM-binding methyltransferase superfamily. RsmB/NOP family.

It localises to the cytoplasm. The enzyme catalyses cytidine(967) in 16S rRNA + S-adenosyl-L-methionine = 5-methylcytidine(967) in 16S rRNA + S-adenosyl-L-homocysteine + H(+). Functionally, specifically methylates the cytosine at position 967 (m5C967) of 16S rRNA. This chain is Ribosomal RNA small subunit methyltransferase B, found in Citrobacter koseri (strain ATCC BAA-895 / CDC 4225-83 / SGSC4696).